A 659-amino-acid chain; its full sequence is Anoctamin-10 (659 aa).

Residues 1-207 lie on the Cytoplasmic side of the membrane; it reads MRVTLSTLDT…DSIRSYFGET (207 aa). Residues 208–228 traverse the membrane as a helical segment; that stretch reads IALYFGFLEYFTFALIPMAII. Over 229 to 240 the chain is Extracellular; it reads GLPYYLFVWEDY. Residues 241–261 form a helical membrane-spanning segment; the sequence is DKYVIFASFNLIWSTVILEVW. The Cytoplasmic segment spans residues 262 to 316; that stretch reads KRGCANMTYRWGTLVMKRQFEEPRPGFHGVLGINSVTGREEPLYSSYKRQLRIYL. A helical membrane pass occupies residues 317-337; it reads VSLPFVCLCLYFSLYVMMIYF. The Extracellular segment spans residues 338–352; it reads DMEDWALSLHEDSGS. The helical transmembrane segment at 353 to 373 threads the bilayer; the sequence is EWTSLLLYVPSIVYAVVIEIM. The Cytoplasmic segment spans residues 374 to 400; that stretch reads NRLYRYAAEFLTSWENHRLESAYQNHL. The chain crosses the membrane as a helical span at residues 401 to 421; sequence VLKVLVFNFLNCFASLFYIAF. Topologically, residues 422–500 are extracellular; that stretch reads VLKDMKLLRQ…YLGTFDDYLE (79 aa). A helical transmembrane segment spans residues 501–521; that stretch reads LFLQFGYVSLFSCVYPLAAAF. The Cytoplasmic segment spans residues 522–553; sequence AVLNNFTEVNSDALKMCRVFKRPFAEPSASIG. A helical membrane pass occupies residues 554 to 574; the sequence is VWQLAFETMSVISVVTNCALI. Topologically, residues 575–590 are extracellular; it reads GMSPQVNAVFPESKTD. The chain crosses the membrane as a helical span at residues 591 to 611; it reads LVLIVVAVEHALLALKFILAF. Residues 612–659 lie on the Cytoplasmic side of the membrane; that stretch reads AIPDKPRHIQQKLARLEFESLEALKQQQMKLVAENLKEEYQEDGKEAT.

The protein belongs to the anoctamin family. As to expression, predominant expression seen in epithelial tissues.

The protein resides in the cell membrane. In terms of biological role, does not exhibit calcium-activated chloride channel (CaCC) activity. Can inhibit the activity of ANO1. This chain is Anoctamin-10 (Ano10), found in Mus musculus (Mouse).